The sequence spans 43 residues: Photosystem I reaction center subunit IX (43 aa).

Residues 7–27 form a helical membrane-spanning segment; the sequence is YLSTAPVLSTIWFGSLAGLLI.

Belongs to the PsaJ family.

The protein localises to the plastid. It is found in the chloroplast thylakoid membrane. May help in the organization of the PsaE and PsaF subunits. In Vitis vinifera (Grape), this protein is Photosystem I reaction center subunit IX.